A 123-amino-acid chain; its full sequence is DNA-directed RNA polymerase I subunit RPA12 (123 aa).

Positions 17, 20, 35, 38, 84, and 87 each coordinate Zn(2+). Residues 17–38 (CPDCGSVLPLPGVQDTVICPRC) form a C4-type zinc finger. A TFIIS-type zinc finger spans residues 80–120 (VDRRCSRCGHEGMAYYTRQMRSADEGQTVFYTCINCKFQEK). A Hairpin motif is present at residues 103–104 (DE). Residues Cys-112 and Cys-115 each coordinate Zn(2+).

The protein belongs to the archaeal RpoM/eukaryotic RPA12/RPB9/RPC11 RNA polymerase family. As to quaternary structure, component of the RNA polymerase I (Pol I) complex consisting of 13 subunits: a ten-subunit catalytic core composed of POLR1A/RPA1, POLR1B/RPA2, POLR1C/RPAC1, POLR1D/RPAC2, POLR1H/RPA12, POLR2E/RPABC1, POLR2F/RPABC2, POLR2H/RPABC3, POLR2K/RPABC4 and POLR2L/RPABC5; a mobile stalk subunit POLR1F/RPA43 protruding from the core and additional subunits homologous to general transcription factors POLR1E/RPA49 and POLR1G/RPA34. Part of Pol I pre-initiation complex (PIC), in which Pol I core assembles with RRN3 and promoter-bound UTBF and SL1/TIF-IB complex.

The protein resides in the nucleus. It is found in the nucleolus. Its function is as follows. Core component of RNA polymerase I (Pol I), a DNA-dependent RNA polymerase which synthesizes ribosomal RNA precursors using the four ribonucleoside triphosphates as substrates. Can mediate Pol I proofreading of the nascent RNA transcript. Anchors into the Pol I active site to monitor transcription fidelity and cleave mis-incorporated 5'-ribonucleotides. The sequence is that of DNA-directed RNA polymerase I subunit RPA12 from Rattus norvegicus (Rat).